Here is a 95-residue protein sequence, read N- to C-terminus: Aspartyl/glutamyl-tRNA(Asn/Gln) amidotransferase subunit C (95 aa).

Belongs to the GatC family. Heterotrimer of A, B and C subunits.

It carries out the reaction L-glutamyl-tRNA(Gln) + L-glutamine + ATP + H2O = L-glutaminyl-tRNA(Gln) + L-glutamate + ADP + phosphate + H(+). The catalysed reaction is L-aspartyl-tRNA(Asn) + L-glutamine + ATP + H2O = L-asparaginyl-tRNA(Asn) + L-glutamate + ADP + phosphate + 2 H(+). Allows the formation of correctly charged Asn-tRNA(Asn) or Gln-tRNA(Gln) through the transamidation of misacylated Asp-tRNA(Asn) or Glu-tRNA(Gln) in organisms which lack either or both of asparaginyl-tRNA or glutaminyl-tRNA synthetases. The reaction takes place in the presence of glutamine and ATP through an activated phospho-Asp-tRNA(Asn) or phospho-Glu-tRNA(Gln). This is Aspartyl/glutamyl-tRNA(Asn/Gln) amidotransferase subunit C from Methylorubrum populi (strain ATCC BAA-705 / NCIMB 13946 / BJ001) (Methylobacterium populi).